A 339-amino-acid polypeptide reads, in one-letter code: Anthranilate phosphoribosyltransferase (339 aa).

5-phospho-alpha-D-ribose 1-diphosphate-binding positions include Gly-79, 82-83 (GD), Thr-87, 89-92 (NVST), 107-115 (KHGNRAVSS), and Ser-119. Gly-79 is a binding site for anthranilate. Ser-91 contributes to the Mg(2+) binding site. Residue Asn-110 coordinates anthranilate. Position 165 (Arg-165) interacts with anthranilate. Residues Asp-224 and Glu-225 each contribute to the Mg(2+) site.

Belongs to the anthranilate phosphoribosyltransferase family. Homodimer. Mg(2+) serves as cofactor.

The enzyme catalyses N-(5-phospho-beta-D-ribosyl)anthranilate + diphosphate = 5-phospho-alpha-D-ribose 1-diphosphate + anthranilate. The protein operates within amino-acid biosynthesis; L-tryptophan biosynthesis; L-tryptophan from chorismate: step 2/5. Functionally, catalyzes the transfer of the phosphoribosyl group of 5-phosphorylribose-1-pyrophosphate (PRPP) to anthranilate to yield N-(5'-phosphoribosyl)-anthranilate (PRA). The protein is Anthranilate phosphoribosyltransferase of Geobacillus stearothermophilus (Bacillus stearothermophilus).